Reading from the N-terminus, the 317-residue chain is Pinoresinol reductase 1 (317 aa).

Residues Thr-18, Tyr-20, Ile-21, Arg-41, Lys-50, Ser-90, Gly-91, Arg-95, Asn-98, Ser-121, and Glu-122 each contribute to the NADP(+) site. Residue Met-125 coordinates (-)-pinoresinol. The NADP(+) site is built by Lys-144 and Phe-166. Lys-144 (proton acceptor) is an active-site residue. 2 residues coordinate (-)-pinoresinol: Met-177 and Val-178.

It belongs to the NmrA-type oxidoreductase family. Isoflavone reductase subfamily. Forms homodimers. In terms of tissue distribution, expressed in roots and stems.

The enzyme catalyses (-)-lariciresinol + NADP(+) = (-)-pinoresinol + NADPH + H(+). The catalysed reaction is (+)-lariciresinol + NADP(+) = (+)-pinoresinol + NADPH + H(+). Reductase involved in lignan biosynthesis. Involved in secondary cell wall biosynthesis in fiber cells. Unlike conventional pinoresinol reductases that can reduce both pinoresinol and lariciresinol, PRR1 shows a strict substrate preference toward pinoresinol. Active on both (+) and (-)-pinoresinol. Abstracts the 4R-hydride from the NADPH cofactor during catalysis. The polypeptide is Pinoresinol reductase 1 (Arabidopsis thaliana (Mouse-ear cress)).